We begin with the raw amino-acid sequence, 183 residues long: NADH-quinone oxidoreductase subunit A (183 aa).

A run of 3 helical transmembrane segments spans residues 11–31, 63–83, and 98–118; these read IIAF…VPLL, FYLV…LYAW, and VVIF…VGAL. Residues 159–183 form a disordered region; that stretch reads TGQIPAQSSGRVKSKTTPALSSEKE.

This sequence belongs to the complex I subunit 3 family. As to quaternary structure, NDH-1 is composed of 14 different subunits. Subunits NuoA, H, J, K, L, M, N constitute the membrane sector of the complex.

The protein localises to the cell inner membrane. The catalysed reaction is a quinone + NADH + 5 H(+)(in) = a quinol + NAD(+) + 4 H(+)(out). In terms of biological role, NDH-1 shuttles electrons from NADH, via FMN and iron-sulfur (Fe-S) centers, to quinones in the respiratory chain. The immediate electron acceptor for the enzyme in this species is believed to be ubiquinone. Couples the redox reaction to proton translocation (for every two electrons transferred, four hydrogen ions are translocated across the cytoplasmic membrane), and thus conserves the redox energy in a proton gradient. In Acinetobacter baumannii (strain AYE), this protein is NADH-quinone oxidoreductase subunit A.